Here is a 388-residue protein sequence, read N- to C-terminus: LL-diaminopimelate aminotransferase (388 aa).

Residues tyrosine 13, glycine 38, lysine 102, tyrosine 126, and asparagine 176 each coordinate substrate. Pyridoxal 5'-phosphate contacts are provided by residues 101-102, tyrosine 126, asparagine 176, tyrosine 207, and 235-237; these read SK and SLS. The residue at position 238 (lysine 238) is an N6-(pyridoxal phosphate)lysine. Arginine 246 contacts pyridoxal 5'-phosphate. Substrate is bound at residue arginine 364.

Belongs to the class-I pyridoxal-phosphate-dependent aminotransferase family. LL-diaminopimelate aminotransferase subfamily. As to quaternary structure, homodimer. Pyridoxal 5'-phosphate serves as cofactor.

The enzyme catalyses (2S,6S)-2,6-diaminopimelate + 2-oxoglutarate = (S)-2,3,4,5-tetrahydrodipicolinate + L-glutamate + H2O + H(+). Its pathway is amino-acid biosynthesis; L-lysine biosynthesis via DAP pathway; LL-2,6-diaminopimelate from (S)-tetrahydrodipicolinate (aminotransferase route): step 1/1. Functionally, involved in the synthesis of meso-diaminopimelate (m-DAP or DL-DAP), required for both lysine and peptidoglycan biosynthesis. Catalyzes the direct conversion of tetrahydrodipicolinate to LL-diaminopimelate. The chain is LL-diaminopimelate aminotransferase from Dehalococcoides mccartyi (strain ATCC BAA-2100 / JCM 16839 / KCTC 5957 / BAV1).